A 269-amino-acid polypeptide reads, in one-letter code: Shikimate dehydrogenase (NADP(+)) (269 aa).

Residues 17–19 (SKS) and threonine 64 contribute to the shikimate site. The active-site Proton acceptor is lysine 68. An NADP(+)-binding site is contributed by glutamate 80. Shikimate-binding residues include asparagine 89 and aspartate 105. Residues 130–134 (GAGGA), 154–159 (NRTHAK), and methionine 213 each bind NADP(+). Tyrosine 215 serves as a coordination point for shikimate. Residue glycine 237 coordinates NADP(+).

This sequence belongs to the shikimate dehydrogenase family. In terms of assembly, homodimer.

It carries out the reaction shikimate + NADP(+) = 3-dehydroshikimate + NADPH + H(+). The protein operates within metabolic intermediate biosynthesis; chorismate biosynthesis; chorismate from D-erythrose 4-phosphate and phosphoenolpyruvate: step 4/7. Involved in the biosynthesis of the chorismate, which leads to the biosynthesis of aromatic amino acids. Catalyzes the reversible NADPH linked reduction of 3-dehydroshikimate (DHSA) to yield shikimate (SA). In Neisseria cinerea, this protein is Shikimate dehydrogenase (NADP(+)).